Consider the following 1428-residue polypeptide: Vacuolar protein sorting-associated protein 8 homolog (1428 aa).

Phosphoserine occurs at positions 26, 32, and 127. Residues 195 to 236 (VGGQYGAISALSINNDCSRLLCGFAKGQITMWDLASGKLLRS) form a WD repeat. The RING-type; atypical zinc-finger motif lies at 1258 to 1310 (CSICLQQYKRRQEMADEIIVFSCGHLYHSFCLQNKECTVEFEGQTRWTCYKCS). The tract at residues 1330-1356 (ITPSQVKMSPSYHQSKGDPTAKKGTSE) is disordered. Residues 1331–1343 (TPSQVKMSPSYHQ) are compositionally biased toward polar residues. Residues 1344–1354 (SKGDPTAKKGT) show a composition bias toward basic and acidic residues.

This sequence belongs to the VPS8 family. Interacts with RAB5C. Interacts with TGFBRAP1. Component of the putative class C core vacuole/endosome tethering (CORVET) complex; the core of which composed of the class C Vps proteins VPS11, VPS16, VPS18 and VPS33A, is associated with VPS8 and TGFBRAP1.

It is found in the early endosome. Plays a role in vesicle-mediated protein trafficking of the endocytic membrane transport pathway. Believed to act as a component of the putative CORVET endosomal tethering complexes which is proposed to be involved in the Rab5-to-Rab7 endosome conversion probably implicating MON1A/B, and via binding SNAREs and SNARE complexes to mediate tethering and docking events during SNARE-mediated membrane fusion. The CORVET complex is proposed to function as a Rab5 effector to mediate early endosome fusion probably in specific endosome subpopulations. Functions predominantly in APPL1-containing endosomes. The chain is Vacuolar protein sorting-associated protein 8 homolog (VPS8) from Homo sapiens (Human).